We begin with the raw amino-acid sequence, 399 residues long: MSIVVENSTVLSALTEKFAEVFGDTKKVEYFFSPGRINLIGEHTDYNGGYVFPASITIGTTGLARLREDNKVKLYSENFPKLGVIEFDLDDVENKDGELWSNYVKGMIVMLKGAGYEIDKGFELLIKGEIPTASGLSSSASLELLVGVVLDDLFKLSVPRLELVQLGQKTENDYIGVNSGILDQFAIGFGEVKKAILLDCNTLKYEMVPVELRDYDIVIMNTNKPRALTESKYNERFAETREALKRMQTKLDIQSLGELSNEEFDANTDLIGDETLIKRARHAVYENNRTKIAQKAFVAGNLTKFGELLNASHASLKDDYEVTGLELDTLAETAQKQAGVLGARMTGAGFGGCAIALVAHDNVSAFEKAVGEVYEEVVGYPASFYVAQIGSGSTKLDVE.

42–45 (EHTD) lines the substrate pocket. ATP is bound by residues serine 76 and 133–139 (ASGLSSS). Residues serine 139 and glutamate 171 each contribute to the Mg(2+) site. Catalysis depends on aspartate 183, which acts as the Proton acceptor. A substrate-binding site is contributed by tyrosine 233.

Belongs to the GHMP kinase family. GalK subfamily.

The protein resides in the cytoplasm. The catalysed reaction is alpha-D-galactose + ATP = alpha-D-galactose 1-phosphate + ADP + H(+). Its pathway is carbohydrate metabolism; galactose metabolism. Functionally, catalyzes the transfer of the gamma-phosphate of ATP to D-galactose to form alpha-D-galactose-1-phosphate (Gal-1-P). This chain is Galactokinase, found in Lactococcus lactis subsp. cremoris (strain MG1363).